Consider the following 647-residue polypeptide: Acetyl-coenzyme A synthetase (647 aa).

Residues 189-192 (RGGK), Thr307, and Asn331 each bind CoA. ATP-binding positions include 383-385 (GEP), 407-412 (DTWWQT), Asp496, and Arg511. Position 519 (Ser519) interacts with CoA. ATP is bound at residue Arg522. The Mg(2+) site is built by His535 and Val538. A CoA-binding site is contributed by Arg580. Lys605 is subject to N6-acetyllysine.

This sequence belongs to the ATP-dependent AMP-binding enzyme family. The cofactor is Mg(2+). Acetylated. Deacetylation by the SIR2-homolog deacetylase activates the enzyme.

The enzyme catalyses acetate + ATP + CoA = acetyl-CoA + AMP + diphosphate. Its function is as follows. Catalyzes the conversion of acetate into acetyl-CoA (AcCoA), an essential intermediate at the junction of anabolic and catabolic pathways. AcsA undergoes a two-step reaction. In the first half reaction, AcsA combines acetate with ATP to form acetyl-adenylate (AcAMP) intermediate. In the second half reaction, it can then transfer the acetyl group from AcAMP to the sulfhydryl group of CoA, forming the product AcCoA. This chain is Acetyl-coenzyme A synthetase, found in Syntrophus aciditrophicus (strain SB).